We begin with the raw amino-acid sequence, 159 residues long: Growth arrest and DNA damage-inducible protein GADD45 gamma (159 aa).

The tract at residues 43–86 (VYESAKVLNVDPDNVTFCVLAADEEDEGDIALQIHFTLIQAFCC) is homodimerization.

Belongs to the GADD45 family. Undergoes concentration-dependent homodimerization, which is required for growth inhibititory activity and enhances interaction with PCNA. Interacts with GADD45GIP1. Interacts with PCNA.

Its function is as follows. Involved in the regulation of growth and apoptosis. Mediates activation of stress-responsive MTK1/MEKK4 MAPKKK. This chain is Growth arrest and DNA damage-inducible protein GADD45 gamma (GADD45G), found in Bos taurus (Bovine).